The following is a 200-amino-acid chain: Large ribosomal subunit protein uL4 (200 aa).

Residues 45–64 (QKTRAEVSGGGIKPWRQKGT) form a disordered region.

This sequence belongs to the universal ribosomal protein uL4 family. Part of the 50S ribosomal subunit.

In terms of biological role, one of the primary rRNA binding proteins, this protein initially binds near the 5'-end of the 23S rRNA. It is important during the early stages of 50S assembly. It makes multiple contacts with different domains of the 23S rRNA in the assembled 50S subunit and ribosome. Its function is as follows. Forms part of the polypeptide exit tunnel. The chain is Large ribosomal subunit protein uL4 from Psychrobacter cryohalolentis (strain ATCC BAA-1226 / DSM 17306 / VKM B-2378 / K5).